A 994-amino-acid polypeptide reads, in one-letter code: Translation initiation factor IF-2 (994 aa).

Polar residues-rich tracts occupy residues Met-1 to Asn-10 and Ser-28 to His-40. A disordered region spans residues Met-1–Glu-405. The segment covering Pro-76–Gly-91 has biased composition (low complexity). A compositionally biased stretch (basic and acidic residues) spans Ala-98–Ala-131. Positions Ala-132–Pro-146 are enriched in low complexity. The span at Pro-147 to Pro-157 shows a compositional bias: pro residues. Low complexity predominate over residues Pro-158–Pro-172. Residues Ala-173–Pro-188 are compositionally biased toward pro residues. A compositionally biased stretch (low complexity) spans Ala-189 to Ala-204. 2 stretches are compositionally biased toward basic and acidic residues: residues Pro-216–Asn-235 and Pro-247–Gln-273. The span at Arg-298–Arg-310 shows a compositional bias: gly residues. Basic and acidic residues-rich tracts occupy residues Val-336 to Gly-350 and Arg-390 to Gly-402. The tr-type G domain maps to Pro-492 to Lys-662. Residues Gly-501 to Thr-508 form a G1 region. Gly-501–Thr-508 provides a ligand contact to GTP. Residues Gly-526–His-530 form a G2 region. The G3 stretch occupies residues Asp-548–Gly-551. GTP is bound by residues Asp-548–His-552 and Asn-602–Asp-605. The segment at Asn-602 to Asp-605 is G4. A G5 region spans residues Ser-638 to Thr-640.

The protein belongs to the TRAFAC class translation factor GTPase superfamily. Classic translation factor GTPase family. IF-2 subfamily.

It is found in the cytoplasm. Its function is as follows. One of the essential components for the initiation of protein synthesis. Protects formylmethionyl-tRNA from spontaneous hydrolysis and promotes its binding to the 30S ribosomal subunits. Also involved in the hydrolysis of GTP during the formation of the 70S ribosomal complex. The chain is Translation initiation factor IF-2 from Phenylobacterium zucineum (strain HLK1).